We begin with the raw amino-acid sequence, 72 residues long: MQSNFIFATLLVLLSLLTFTYASGSSSMTSSSMPMFGGAIVAAFAFAIFSRLAQNFAPRAIFSLLPYHSVSC.

Positions 1 to 22 are cleaved as a signal peptide; it reads MQSNFIFATLLVLLSLLTFTYA. Residues 23–28 lie on the Extracellular side of the membrane; that stretch reads SGSSSM. The chain crosses the membrane as a helical span at residues 29 to 49; it reads TSSSMPMFGGAIVAAFAFAIF. Residues 50–72 lie on the Cytoplasmic side of the membrane; that stretch reads SRLAQNFAPRAIFSLLPYHSVSC.

It localises to the membrane. This is an uncharacterized protein from Dictyostelium discoideum (Social amoeba).